A 393-amino-acid polypeptide reads, in one-letter code: Acetate kinase (393 aa).

Position 8 (Asn8) interacts with Mg(2+). Lys15 provides a ligand contact to ATP. Position 91 (Arg91) interacts with substrate. Asp148 acts as the Proton donor/acceptor in catalysis. ATP-binding positions include 206 to 210 (HLGSG), 280 to 282 (DMR), and 325 to 329 (GVGEN). Glu376 is a binding site for Mg(2+).

This sequence belongs to the acetokinase family. Homodimer. Mg(2+) serves as cofactor. The cofactor is Mn(2+).

The protein resides in the cytoplasm. The catalysed reaction is acetate + ATP = acetyl phosphate + ADP. It participates in metabolic intermediate biosynthesis; acetyl-CoA biosynthesis; acetyl-CoA from acetate: step 1/2. Functionally, catalyzes the formation of acetyl phosphate from acetate and ATP. Can also catalyze the reverse reaction. The protein is Acetate kinase of Rhizobium meliloti (Ensifer meliloti).